Here is a 399-residue protein sequence, read N- to C-terminus: Galactokinase (399 aa).

A substrate-binding site is contributed by 42-45 (EHTD). Residues Ser-76 and 133–139 (ASGLSSS) each bind ATP. Mg(2+) contacts are provided by Ser-139 and Glu-171. Asp-183 acts as the Proton acceptor in catalysis. Tyr-233 lines the substrate pocket.

This sequence belongs to the GHMP kinase family. GalK subfamily.

The protein resides in the cytoplasm. It carries out the reaction alpha-D-galactose + ATP = alpha-D-galactose 1-phosphate + ADP + H(+). The protein operates within carbohydrate metabolism; galactose metabolism. Functionally, catalyzes the transfer of the gamma-phosphate of ATP to D-galactose to form alpha-D-galactose-1-phosphate (Gal-1-P). In Lactococcus lactis subsp. cremoris (strain MG1363), this protein is Galactokinase.